The primary structure comprises 252 residues: Triosephosphate isomerase (252 aa).

Residue 10-12 (NWK) coordinates substrate. Catalysis depends on His-96, which acts as the Electrophile. Residue Glu-168 is the Proton acceptor of the active site. Substrate-binding positions include Gly-174, Ser-214, and 235-236 (GG).

Belongs to the triosephosphate isomerase family. As to quaternary structure, homodimer.

Its subcellular location is the cytoplasm. The catalysed reaction is D-glyceraldehyde 3-phosphate = dihydroxyacetone phosphate. It functions in the pathway carbohydrate biosynthesis; gluconeogenesis. Its pathway is carbohydrate degradation; glycolysis; D-glyceraldehyde 3-phosphate from glycerone phosphate: step 1/1. Functionally, involved in the gluconeogenesis. Catalyzes stereospecifically the conversion of dihydroxyacetone phosphate (DHAP) to D-glyceraldehyde-3-phosphate (G3P). The polypeptide is Triosephosphate isomerase (Streptococcus gordonii (strain Challis / ATCC 35105 / BCRC 15272 / CH1 / DL1 / V288)).